Consider the following 548-residue polypeptide: Probable malate:quinone oxidoreductase (548 aa).

The segment at 521–548 (DKPQAADSTPKPQLKPQPVQKEVADIAL) is disordered. Positions 530–541 (PKPQLKPQPVQK) are enriched in low complexity.

The protein belongs to the MQO family. FAD serves as cofactor.

It catalyses the reaction (S)-malate + a quinone = a quinol + oxaloacetate. It participates in carbohydrate metabolism; tricarboxylic acid cycle; oxaloacetate from (S)-malate (quinone route): step 1/1. In Shigella sonnei (strain Ss046), this protein is Probable malate:quinone oxidoreductase.